We begin with the raw amino-acid sequence, 525 residues long: 2,3-bisphosphoglycerate-independent phosphoglycerate mutase (525 aa).

Mn(2+) contacts are provided by aspartate 15 and serine 65. Serine 65 functions as the Phosphoserine intermediate in the catalytic mechanism. Residues histidine 126, 156–157 (RD), arginine 188, arginine 194, 258–261 (RPDR), and lysine 331 each bind substrate. Mn(2+) is bound by residues aspartate 398, histidine 402, aspartate 439, histidine 440, and histidine 457.

It belongs to the BPG-independent phosphoglycerate mutase family. In terms of assembly, monomer. It depends on Mn(2+) as a cofactor.

The enzyme catalyses (2R)-2-phosphoglycerate = (2R)-3-phosphoglycerate. It functions in the pathway carbohydrate degradation; glycolysis; pyruvate from D-glyceraldehyde 3-phosphate: step 3/5. Functionally, catalyzes the interconversion of 2-phosphoglycerate and 3-phosphoglycerate. In Picosynechococcus sp. (strain ATCC 27264 / PCC 7002 / PR-6) (Agmenellum quadruplicatum), this protein is 2,3-bisphosphoglycerate-independent phosphoglycerate mutase.